Consider the following 259-residue polypeptide: 5'-nucleotidase SurE (259 aa).

Asp8, Asp9, Ser40, and Asn92 together coordinate a divalent metal cation.

Belongs to the SurE nucleotidase family. A divalent metal cation serves as cofactor.

The protein resides in the cytoplasm. It carries out the reaction a ribonucleoside 5'-phosphate + H2O = a ribonucleoside + phosphate. Functionally, nucleotidase that shows phosphatase activity on nucleoside 5'-monophosphates. This chain is 5'-nucleotidase SurE, found in Xanthomonas euvesicatoria pv. vesicatoria (strain 85-10) (Xanthomonas campestris pv. vesicatoria).